Consider the following 1220-residue polypeptide: Osmosensing histidine protein kinase SLN1 (1220 aa).

Residues 1–22 (MRFGLPSKLELTPPFRIGIRTQ) lie on the Cytoplasmic side of the membrane. Residues 23 to 46 (LTALVSIVALGSLIILAVTTGVYF) form a helical membrane-spanning segment. The Extracellular portion of the chain corresponds to 47–333 (TSNYKNLRSD…FLSPATKLAK (287 aa)). N-linked (GlcNAc...) asparagine glycans are attached at residues N100, N138, N142, N181, N224, and N272. A helical membrane pass occupies residues 334-354 (IITGTVIAIGVFVILLTLPLA). At 355 to 1220 (HWAVQPIVRL…AAYQGKKNNK (866 aa)) the chain is on the cytoplasmic side. Disordered regions lie at residues 414–433 (GSTTSVSGHGGSGHGSGAAF) and 444–500 (NLGN…HILT). The segment covering 451 to 468 (SPPEEENKIPNNHTDAKI) has biased composition (basic and acidic residues). At S502 the chain carries Phosphoserine. In terms of domain architecture, Histidine kinase spans 573–928 (NISHELRTPL…KFTFTLPLNQ (356 aa)). A Phosphohistidine; by autocatalysis modification is found at H576. 2 positions are modified to phosphoserine: S758 and S833. 2 disordered regions span residues 960–1016 (AKSI…DNGG) and 1040–1081 (NSLS…VKDD). A compositionally biased stretch (polar residues) spans 965–984 (SRQSTSSVATPATNRSSLTN). Residues 988-1000 (PEVRSKGKHETKD) show a composition bias toward basic and acidic residues. Residues S1041 and S1044 each carry the phosphoserine modification. Positions 1063–1075 (LQSTGTATSSRNI) are enriched in polar residues. A Response regulatory domain is found at 1089–1210 (KILVVEDNHV…KLKTILTEFC (122 aa)). Positions 1094, 1095, 1144, and 1195 each coordinate Mg(2+). D1144 is subject to 4-aspartylphosphate.

In terms of assembly, interacts with DJP1, MOG1 and YPD1. The phosphorelay mechanism involves the sequential transfer of a phosphate group from His-576 (H1) in the histidine kinase domain (transmitter domain) to Asp-1144 (D1) of the response regulatory domain (receiver domain). This transfer probably occurs between two SLN1 molecules, rather than intramolecularly. The phosphate group is further transferred to 'His-64' (H2) of YPD1 and finally to 'Asp-554' (D2) of SSK1 or 'Asp-427' (D2) of SKN7.

Its subcellular location is the cell membrane. It catalyses the reaction ATP + protein L-histidine = ADP + protein N-phospho-L-histidine.. Functionally, histidine kinase that acts as an osmosensor at the plasma membrane. Part of the bifurcated SLN1-YPD1-SKN7/SSK1 two-component regulatory system, which controls activity of the HOG1 pathway and gene expression in response to changes in the osmolarity of the extracellular environment. Under normal osmotic conditions, the histidine kinase autophosphorylates His-576. This phosphate is subsequently transferred to Asp-1144, from where it is relayed to 'His-64' of the phosphorelay intermediate protein YPD1. Under high osmolarity conditions, the histidine kinase is no longer active. This is Osmosensing histidine protein kinase SLN1 (SLN1) from Saccharomyces cerevisiae (strain ATCC 204508 / S288c) (Baker's yeast).